The chain runs to 245 residues: Adapter protein MecA (245 aa).

It belongs to the MecA family. In terms of assembly, homodimer.

Its function is as follows. Enables the recognition and targeting of unfolded and aggregated proteins to the ClpC protease or to other proteins involved in proteolysis. In Streptococcus pneumoniae serotype 19F (strain G54), this protein is Adapter protein MecA.